We begin with the raw amino-acid sequence, 271 residues long: MIRTLLLSALVAGALSCGYPTYEVQHDVSRVVGGQEASPNSWPWQVSLQYLSSGKWHHTCGGSLVANNWVLTAAHCISNSRTYRVLLGRHSLSTSESGSLAVQVSKLVVHEKWNAQKLSNGNDIALVKLASPVALTSKIQTACLPPAGTILPNNYPCYVTGWGRLQTNGATPDVLQQGRLLVVDYATCSSASWWGSSVKTNMVCAGGDGVTSSCNGDSGGPLNCQASNGQWQVHGIVSFGSTLGCNYPRKPSVFTRVSNYIDWINSVIAKN.

Positions 1-16 (MIRTLLLSALVAGALS) are cleaved as a signal peptide. The propeptide at 17–30 (CGYPTYEVQHDVSR) is activation peptide. The Peptidase S1 domain occupies 31–269 (VVGGQEASPN…YIDWINSVIA (239 aa)). A disulfide bridge links C60 with C76. Catalysis depends on charge relay system residues H75 and D123. 3 disulfides stabilise this stretch: C157–C224, C188–C204, and C214–C245. S218 (charge relay system) is an active-site residue.

It belongs to the peptidase S1 family. Elastase subfamily. As to quaternary structure, interacts with CPA1. Interacts with SERPINA1. As to expression, pancreas.

The protein resides in the secreted. The enzyme catalyses Preferential cleavage: Leu-|-Xaa, Met-|-Xaa and Phe-|-Xaa. Hydrolyzes elastin.. Its function is as follows. Elastase that enhances insulin signaling and might have a physiologic role in cellular glucose metabolism. Circulates in plasma and reduces platelet hyperactivation, triggers both insulin secretion and degradation, and increases insulin sensitivity. This Rattus norvegicus (Rat) protein is Chymotrypsin-like elastase family member 2A (Cela2a).